A 698-amino-acid polypeptide reads, in one-letter code: Polyribonucleotide nucleotidyltransferase (698 aa).

Asp-485 and Asp-491 together coordinate Mg(2+). The 60-residue stretch at 552 to 611 (PRITTIKINPEKIRDVIGKGGAVIRALTEETGTTIELDDDGTVKIASSNGEATKEAIRRI) folds into the KH domain. Positions 621–689 (GRVYNGKVIR…RQGRVRLSIK (69 aa)) constitute an S1 motif domain.

The protein belongs to the polyribonucleotide nucleotidyltransferase family. Component of the RNA degradosome, which is a multiprotein complex involved in RNA processing and mRNA degradation. It depends on Mg(2+) as a cofactor.

The protein resides in the cytoplasm. It carries out the reaction RNA(n+1) + phosphate = RNA(n) + a ribonucleoside 5'-diphosphate. In terms of biological role, involved in mRNA degradation. Catalyzes the phosphorolysis of single-stranded polyribonucleotides processively in the 3'- to 5'-direction. The polypeptide is Polyribonucleotide nucleotidyltransferase (Shewanella denitrificans (strain OS217 / ATCC BAA-1090 / DSM 15013)).